Here is a 363-residue protein sequence, read N- to C-terminus: Putative replication factor C small subunit L510 (363 aa).

47–54 (GPPGTGKT) contributes to the ATP binding site.

The protein belongs to the activator 1 small subunits family. RfcS subfamily.

In terms of biological role, part of the RFC clamp loader complex which loads the PCNA sliding clamp onto DNA. In Acanthamoeba polyphaga mimivirus (APMV), this protein is Putative replication factor C small subunit L510.